Reading from the N-terminus, the 456-residue chain is Riboflavin transporter RibZ (456 aa).

14 consecutive transmembrane segments (helical) span residues 5 to 25, 45 to 65, 78 to 98, 105 to 125, 134 to 154, 158 to 178, 192 to 212, 220 to 240, 260 to 280, 289 to 309, 321 to 341, 343 to 363, 385 to 405, and 428 to 448; these read WIVL…GSIL, WVVT…GKLG, FFIF…STLI, AVGA…AFPA, ITGA…GIIL, GWPS…FLGI, SFDI…LLAM, LYLG…EVKF, IIGV…PFYL, MMAG…APIA, ILTA…LLKA, SPLY…GAFS, FLAT…SSFF, and QSYW…VFFM.

It belongs to the major facilitator superfamily.

The protein localises to the cell membrane. Functionally, transports riboflavin into the cell. This Clostridioides difficile (strain 630) (Peptoclostridium difficile) protein is Riboflavin transporter RibZ.